The chain runs to 415 residues: ATP-dependent RNA helicase RhlB (415 aa).

The Q motif motif lies at 9–37 (QRFSALPLHPIVRGALAKKGFDFCTPIQA). In terms of domain architecture, Helicase ATP-binding spans 40–218 (LPISLNGRDV…FEDMNDPEYI (179 aa)). 53 to 60 (AQTGTGKT) serves as a coordination point for ATP. A DEAD box motif is present at residues 164–167 (DEAD). Positions 241–389 (DKMALLLTLM…VSQYETEALL (149 aa)) constitute a Helicase C-terminal domain.

The protein belongs to the DEAD box helicase family. RhlB subfamily. Component of the RNA degradosome, which is a multiprotein complex involved in RNA processing and mRNA degradation.

It is found in the cytoplasm. It catalyses the reaction ATP + H2O = ADP + phosphate + H(+). In terms of biological role, DEAD-box RNA helicase involved in RNA degradation. Has RNA-dependent ATPase activity and unwinds double-stranded RNA. This chain is ATP-dependent RNA helicase RhlB, found in Haemophilus influenzae (strain PittGG).